A 311-amino-acid chain; its full sequence is Formimidoylglutamase (311 aa).

6 residues coordinate Mn(2+): H122, D151, H153, D155, C242, and D244.

This sequence belongs to the arginase family. As to quaternary structure, homodimer. Mn(2+) serves as cofactor.

It catalyses the reaction N-formimidoyl-L-glutamate + H2O = formamide + L-glutamate. Its pathway is amino-acid degradation; L-histidine degradation into L-glutamate; L-glutamate from N-formimidoyl-L-glutamate (hydrolase route): step 1/1. Catalyzes the conversion of N-formimidoyl-L-glutamate to L-glutamate and formamide. The protein is Formimidoylglutamase of Pseudomonas aeruginosa (strain ATCC 15692 / DSM 22644 / CIP 104116 / JCM 14847 / LMG 12228 / 1C / PRS 101 / PAO1).